Consider the following 235-residue polypeptide: Sugar fermentation stimulation protein homolog (235 aa).

Belongs to the SfsA family.

The chain is Sugar fermentation stimulation protein homolog from Photorhabdus laumondii subsp. laumondii (strain DSM 15139 / CIP 105565 / TT01) (Photorhabdus luminescens subsp. laumondii).